Reading from the N-terminus, the 166-residue chain is Cytochrome c-type biogenesis protein CcmE (166 aa).

Over 1 to 7 the chain is Cytoplasmic; it reads MTRKQKR. The chain crosses the membrane as a helical; Signal-anchor for type II membrane protein span at residues 8–28; sequence LALIASGAVVVSLAVGLVMFA. At 29–166 the chain is on the periplasmic side; that stretch reads LRDNIVFFYS…QTAPQGAQAY (138 aa). Residues histidine 122 and tyrosine 126 each coordinate heme. The disordered stretch occupies residues 139-166; the sequence is GVWQEEGKSEGKPSAIPAQTAPQGAQAY.

This sequence belongs to the CcmE/CycJ family.

It localises to the cell inner membrane. In terms of biological role, heme chaperone required for the biogenesis of c-type cytochromes. Transiently binds heme delivered by CcmC and transfers the heme to apo-cytochromes in a process facilitated by CcmF and CcmH. This chain is Cytochrome c-type biogenesis protein CcmE, found in Methylocella silvestris (strain DSM 15510 / CIP 108128 / LMG 27833 / NCIMB 13906 / BL2).